A 166-amino-acid polypeptide reads, in one-letter code: Regulatory protein RecX (166 aa).

Belongs to the RecX family.

The protein resides in the cytoplasm. Modulates RecA activity. This is Regulatory protein RecX from Escherichia coli (strain K12 / MC4100 / BW2952).